Consider the following 345-residue polypeptide: Anthranilate phosphoribosyltransferase (345 aa).

5-phospho-alpha-D-ribose 1-diphosphate is bound by residues Gly80, 83–84, Thr88, 90–93, 108–116, and Ser120; these read GD, NIST, and KHGNRSVSS. Gly80 lines the anthranilate pocket. Ser92 is a binding site for Mg(2+). Asn111 contacts anthranilate. Arg166 serves as a coordination point for anthranilate. Residues Asp225 and Glu226 each coordinate Mg(2+).

The protein belongs to the anthranilate phosphoribosyltransferase family. In terms of assembly, homodimer. Mg(2+) serves as cofactor.

The enzyme catalyses N-(5-phospho-beta-D-ribosyl)anthranilate + diphosphate = 5-phospho-alpha-D-ribose 1-diphosphate + anthranilate. It participates in amino-acid biosynthesis; L-tryptophan biosynthesis; L-tryptophan from chorismate: step 2/5. In terms of biological role, catalyzes the transfer of the phosphoribosyl group of 5-phosphorylribose-1-pyrophosphate (PRPP) to anthranilate to yield N-(5'-phosphoribosyl)-anthranilate (PRA). The protein is Anthranilate phosphoribosyltransferase of Pelotomaculum thermopropionicum (strain DSM 13744 / JCM 10971 / SI).